The following is a 382-amino-acid chain: Histidinol-phosphate aminotransferase (382 aa).

Positions 1–24 (MTSAPRPRPTLDDLPLREDLRGKS) are disordered. Residues 9–22 (PTLDDLPLREDLRG) show a composition bias toward basic and acidic residues. The residue at position 233 (lysine 233) is an N6-(pyridoxal phosphate)lysine.

Belongs to the class-II pyridoxal-phosphate-dependent aminotransferase family. Histidinol-phosphate aminotransferase subfamily. Homodimer. The cofactor is pyridoxal 5'-phosphate.

It catalyses the reaction L-histidinol phosphate + 2-oxoglutarate = 3-(imidazol-4-yl)-2-oxopropyl phosphate + L-glutamate. Its pathway is amino-acid biosynthesis; L-histidine biosynthesis; L-histidine from 5-phospho-alpha-D-ribose 1-diphosphate: step 7/9. This Mycobacterium ulcerans (strain Agy99) protein is Histidinol-phosphate aminotransferase.